The sequence spans 252 residues: Protein BTG3 (252 aa).

The tract at residues 138–162 is disordered; it reads VTSDYHSGSSSSDEDTSKEVEVKPS.

The protein belongs to the BTG family. Highly expressed in the brain.

Its function is as follows. Overexpression impairs serum-induced cell cycle progression from the G0/G1 to S phase. The sequence is that of Protein BTG3 from Rattus norvegicus (Rat).